The sequence spans 53 residues: Ovomucoid (53 aa).

Residues Val-3–Cys-53 form the Kazal-like domain. Disulfide bonds link Cys-5–Cys-35, Cys-13–Cys-32, and Cys-21–Cys-53. Residue Asn-42 is glycosylated (N-linked (GlcNAc...) asparagine).

It is found in the secreted. This is Ovomucoid from Turnix sylvaticus (Common buttonquail).